Consider the following 273-residue polypeptide: NLP effector protein 10 (273 aa).

The N-terminal stretch at 1–21 (MKLPTFLIGFVALLVTSNGSA) is a signal peptide. A glycan (N-linked (GlcNAc...) asparagine) is linked at Asn91. The Conserved undecapeptide motif motif lies at 129-139 (AIMYAWYLPRA). The Conserved heptapeptide motif motif lies at 149–155 (GHRHYWL).

The protein belongs to the Necrosis inducing protein (NPP1) family.

The protein localises to the secreted. Its function is as follows. Secreted effector that acts as a pathogen-associated molecular pattern (PAMP) recognized by the plant immune system. Seems not to induce necrosis in Nicotiana benthamiana leaves but significantly improves disease resistance of Arabidopsis thaliana to Hyaloperonospora arabidopsidis and causes an inhibition of plant growth which is typically associated with enhanced immunity when over-expressed in Arabidopsis. The sequence is that of NLP effector protein 10 from Plasmopara viticola (Downy mildew of grapevine).